A 406-amino-acid polypeptide reads, in one-letter code: tRNA-specific 2-thiouridylase MnmA (406 aa).

Residues 6–13 (AMSGGVDS) and Leu32 contribute to the ATP site. The active-site Nucleophile is the Cys101. Cys101 and Cys193 form a disulfide bridge. Gly125 provides a ligand contact to ATP. The interval 143 to 145 (KDQ) is interaction with tRNA. Cys193 functions as the Cysteine persulfide intermediate in the catalytic mechanism. The interval 378–406 (GAPIEEQPAPGTVGAVDADAIEQGEDAQR) is disordered. Over residues 396-406 (DAIEQGEDAQR) the composition is skewed to acidic residues.

Belongs to the MnmA/TRMU family.

It is found in the cytoplasm. It catalyses the reaction S-sulfanyl-L-cysteinyl-[protein] + uridine(34) in tRNA + AH2 + ATP = 2-thiouridine(34) in tRNA + L-cysteinyl-[protein] + A + AMP + diphosphate + H(+). In terms of biological role, catalyzes the 2-thiolation of uridine at the wobble position (U34) of tRNA, leading to the formation of s(2)U34. In Corynebacterium urealyticum (strain ATCC 43042 / DSM 7109), this protein is tRNA-specific 2-thiouridylase MnmA.